We begin with the raw amino-acid sequence, 379 residues long: Glucose-1-phosphate adenylyltransferase (379 aa).

Alpha-D-glucose 1-phosphate contacts are provided by residues Gly164, 179-180 (EK), and Ser190.

Belongs to the bacterial/plant glucose-1-phosphate adenylyltransferase family. As to quaternary structure, homotetramer.

It carries out the reaction alpha-D-glucose 1-phosphate + ATP + H(+) = ADP-alpha-D-glucose + diphosphate. Its pathway is glycan biosynthesis; glycogen biosynthesis. In terms of biological role, involved in the biosynthesis of ADP-glucose, a building block required for the elongation reactions to produce glycogen. Catalyzes the reaction between ATP and alpha-D-glucose 1-phosphate (G1P) to produce pyrophosphate and ADP-Glc. In Streptococcus equi subsp. zooepidemicus (strain H70), this protein is Glucose-1-phosphate adenylyltransferase.